The following is a 292-amino-acid chain: Nitrogenase iron protein (292 aa).

An ATP-binding site is contributed by 10 to 17 (GKGGIGKS). C98 contacts [4Fe-4S] cluster. An ADP-ribosylarginine; by dinitrogenase reductase ADP-ribosyltransferase modification is found at R101. C133 is a [4Fe-4S] cluster binding site.

Belongs to the NifH/BchL/ChlL family. Homodimer. It depends on [4Fe-4S] cluster as a cofactor. Post-translationally, the reversible ADP-ribosylation of Arg-101 inactivates the nitrogenase reductase and regulates nitrogenase activity.

The catalysed reaction is N2 + 8 reduced [2Fe-2S]-[ferredoxin] + 16 ATP + 16 H2O = H2 + 8 oxidized [2Fe-2S]-[ferredoxin] + 2 NH4(+) + 16 ADP + 16 phosphate + 6 H(+). The key enzymatic reactions in nitrogen fixation are catalyzed by the nitrogenase complex, which has 2 components: the iron protein and the molybdenum-iron protein. This chain is Nitrogenase iron protein, found in Teredinibacter turnerae (strain ATCC 39867 / T7901).